We begin with the raw amino-acid sequence, 543 residues long: UBP9-binding protein bun62 (543 aa).

S43 bears the Phosphoserine mark. 5 WD repeats span residues 239–279, 320–361, 362–401, 404–448, and 513–542; these read LNSS…QPLH, FSKS…DVFH, SYFA…LVAR, GHKS…IHRP, and VDDS…TWQR.

Interacts with ubp9 and bun107.

It localises to the nucleus. The protein resides in the cytoplasm. Its subcellular location is the cell tip. In terms of biological role, required for the ubp9 recruitment to septa and cell tips but also for its enzymatic activity at these specific locations. The protein is UBP9-binding protein bun62 (bun62) of Schizosaccharomyces pombe (strain 972 / ATCC 24843) (Fission yeast).